A 153-amino-acid chain; its full sequence is UPF0260 protein YcgN (153 aa).

Belongs to the UPF0260 family.

This is UPF0260 protein YcgN from Salmonella paratyphi B (strain ATCC BAA-1250 / SPB7).